The following is a 196-amino-acid chain: Xanthine phosphoribosyltransferase (196 aa).

Xanthine-binding residues include Leu-26 and Asn-33. 134 to 138 (ASGEA) contacts 5-phospho-alpha-D-ribose 1-diphosphate. Lys-162 is a binding site for xanthine.

The protein belongs to the purine/pyrimidine phosphoribosyltransferase family. Xpt subfamily. Homodimer.

The protein localises to the cytoplasm. The enzyme catalyses XMP + diphosphate = xanthine + 5-phospho-alpha-D-ribose 1-diphosphate. It participates in purine metabolism; XMP biosynthesis via salvage pathway; XMP from xanthine: step 1/1. Functionally, converts the preformed base xanthine, a product of nucleic acid breakdown, to xanthosine 5'-monophosphate (XMP), so it can be reused for RNA or DNA synthesis. The chain is Xanthine phosphoribosyltransferase from Moorella thermoacetica (strain ATCC 39073 / JCM 9320).